The chain runs to 2774 residues: Teneurin-2 (2774 aa).

A Teneurin N-terminal domain is found at 1–375 (MDVKDRRHRS…KPSKYCSWKC (375 aa)). Residues 1–379 (MDVKDRRHRS…YCSWKCAALS (379 aa)) lie on the Cytoplasmic side of the membrane. Residues serine 90 and serine 124 each carry the phosphoserine modification. Residues 111–271 (TGSDADSDTE…HHHSSANSLN (161 aa)) form a disordered region. Over residues 141 to 155 (SSGLSSRENSALTLT) the composition is skewed to polar residues. Threonine 155 is subject to Phosphothreonine. Position 157 is a phosphoserine (serine 157). Basic and acidic residues predominate over residues 159-168 (NENKSDDDNG). The segment covering 174 to 188 (TSSSSLLPSAQLPSS) has biased composition (low complexity). Polar residues predominate over residues 202-211 (DSNTSHQIMD). The segment covering 229-240 (SGPQQASSSGPP) has biased composition (low complexity). Residues 380-400 (AIAAALLLAILLAYFIAMHLL) traverse the membrane as a helical segment. At 401 to 2774 (GLNWQLQPAD…FLRQNEMGKR (2374 aa)) the chain is on the extracellular side. Residues asparagine 443 and asparagine 482 are each glycosylated (N-linked (GlcNAc...) asparagine). EGF-like domains lie at 575–603 (DCPR…ADCA), 605–634 (AACP…AECD), 636–668 (PMNQ…EHCE), 669–701 (EVDC…NCEL), 702–735 (ARVQ…PDCS), 738–766 (VCSV…AACD), 769–797 (VCHP…EHCT), and 808–841 (DGCP…PGCN). 22 cysteine pairs are disulfide-bonded: cysteine 576/cysteine 586, cysteine 580/cysteine 591, cysteine 593/cysteine 602, cysteine 611/cysteine 622, cysteine 624/cysteine 633, cysteine 640/cysteine 651, cysteine 645/cysteine 656, cysteine 658/cysteine 667, cysteine 672/cysteine 683, cysteine 677/cysteine 688, cysteine 690/cysteine 699, cysteine 710/cysteine 723, cysteine 725/cysteine 734, cysteine 739/cysteine 749, cysteine 743/cysteine 754, cysteine 756/cysteine 765, cysteine 770/cysteine 780, cysteine 774/cysteine 785, cysteine 787/cysteine 796, cysteine 810/cysteine 820, cysteine 814/cysteine 829, and cysteine 831/cysteine 840. Asparagine 925, asparagine 948, and asparagine 1267 each carry an N-linked (GlcNAc...) asparagine glycan. 5 NHL repeats span residues 1272 to 1316 (LELR…VKSL), 1342 to 1386 (ARCG…NGII), 1401 to 1452 (LSCD…IAGR), 1474 to 1501 (LESA…INRL), and 1530 to 1573 (CYSG…VSKN). Residues 1583 to 1602 (YEAASPGEQELYVFNADGIH) form a YD 1 repeat. Asparagine 1616 is a glycosylation site (N-linked (GlcNAc...) asparagine). YD repeat units lie at residues 1619–1639 (YSAD…LKIR), 1682–1701 (YDGN…WTTF), and 1702–1724 (YDYD…TSLH). N-linked (GlcNAc...) asparagine glycans are attached at residues asparagine 1712, asparagine 1749, asparagine 1773, asparagine 1807, and asparagine 1892. 18 YD repeats span residues 1895 to 1914 (YFFN…ERTD), 1936 to 1954 (YLDK…YIFE), 1955 to 1975 (YDSS…HSMS), 1982 to 1999 (YIRN…VIFD), 2000 to 2021 (YSDD…VFYK), 2022 to 2039 (YGKL…TAVT), 2042 to 2062 (YDET…FSCT), 2065 to 2085 (YRKV…EGMI), 2093 to 2113 (YHDN…TPLP), 2119 to 2136 (YDEI…GVIY), 2137 to 2163 (YDIN…IKEV), 2165 to 2178 (YEMF…MTVQ), 2179 to 2202 (YDSM…TKYT), 2205 to 2225 (YDGD…WRYS), 2226 to 2246 (YDLN…LMPL), 2248 to 2268 (YDLR…DDDG), 2280 to 2300 (YNSK…SVQY), and 2302 to 2322 (YDGV…LQYF). Asparagine 1993 carries an N-linked (GlcNAc...) asparagine glycan. N-linked (GlcNAc...) asparagine glycosylation occurs at asparagine 2197. The N-linked (GlcNAc...) asparagine glycan is linked to asparagine 2337. The stretch at 2348-2389 (YDLQGHLFAMESSSGEEYYVASDNTGTPLAVFSINGLMIKQL) is one YD 23 repeat. Asparagine 2648 is a glycosylation site (N-linked (GlcNAc...) asparagine).

The protein belongs to the tenascin family. Teneurin subfamily. Homodimer; disulfide-linked. Heterodimer with either TENM1 or TENM3. May also form heterodimer with TENM4. Interacts with ADGRL1 isoform 2. In terms of processing, derives from the membrane form by proteolytic processing. Post-translationally, derives from the plasma membrane form by proteolytic cleavage and translocates to the nucleus. Homophilic binding of the C-terminal extracellular domain stimulates its proteolytic cleavage and release in the cytoplasmic. Is subjected to rapid degradation by the proteasome pathway. As to expression, expressed in the brain (at protein level).

It localises to the cell membrane. The protein localises to the presynaptic cell membrane. The protein resides in the postsynaptic cell membrane. Its subcellular location is the endoplasmic reticulum. It is found in the golgi apparatus. It localises to the synapse. The protein localises to the cell projection. The protein resides in the dendritic spine. Its subcellular location is the filopodium. It is found in the growth cone. It localises to the nucleus. The protein localises to the PML body. Its function is as follows. Involved in neural development, regulating the establishment of proper connectivity within the nervous system. Acts as a ligand of the ADGRL1 and ADGRL3 receptors that are expressed at the surface of adjacent cells. Promotes the formation of filopodia and enlarged growth cone in neuronal cells. Mediates axon guidance and homophilic and heterophilic cell-cell adhesion. May function as a cellular signal transducer. Induces gene transcription inhibition. The polypeptide is Teneurin-2 (Tenm2) (Rattus norvegicus (Rat)).